A 25-amino-acid polypeptide reads, in one-letter code: U11-ctenitoxin-Co1b (25 aa).

2 disulfide bridges follow: Cys4-Cys18 and Cys11-Cys22.

Monomer. In terms of tissue distribution, expressed by the venom gland.

The protein localises to the secreted. Functionally, neurotoxin. This Ctenus ornatus (Brazilian spider) protein is U11-ctenitoxin-Co1b.